A 192-amino-acid polypeptide reads, in one-letter code: Imidazoleglycerol-phosphate dehydratase (192 aa).

The protein belongs to the imidazoleglycerol-phosphate dehydratase family.

It localises to the cytoplasm. The catalysed reaction is D-erythro-1-(imidazol-4-yl)glycerol 3-phosphate = 3-(imidazol-4-yl)-2-oxopropyl phosphate + H2O. It functions in the pathway amino-acid biosynthesis; L-histidine biosynthesis; L-histidine from 5-phospho-alpha-D-ribose 1-diphosphate: step 6/9. The protein is Imidazoleglycerol-phosphate dehydratase of Vesicomyosocius okutanii subsp. Calyptogena okutanii (strain HA).